The sequence spans 259 residues: Deoxyribose-phosphate aldolase (259 aa).

D102 acts as the Proton donor/acceptor in catalysis. Residue K167 is the Schiff-base intermediate with acetaldehyde of the active site. K201 (proton donor/acceptor) is an active-site residue.

The protein belongs to the DeoC/FbaB aldolase family. DeoC type 2 subfamily.

The protein resides in the cytoplasm. It catalyses the reaction 2-deoxy-D-ribose 5-phosphate = D-glyceraldehyde 3-phosphate + acetaldehyde. Its pathway is carbohydrate degradation; 2-deoxy-D-ribose 1-phosphate degradation; D-glyceraldehyde 3-phosphate and acetaldehyde from 2-deoxy-alpha-D-ribose 1-phosphate: step 2/2. In terms of biological role, catalyzes a reversible aldol reaction between acetaldehyde and D-glyceraldehyde 3-phosphate to generate 2-deoxy-D-ribose 5-phosphate. In Salmonella dublin (strain CT_02021853), this protein is Deoxyribose-phosphate aldolase.